We begin with the raw amino-acid sequence, 716 residues long: Beta-1,2-glucosyltransferase (716 aa).

Sophorose contacts are provided by Tyr52, Ile99, Ala101, Glu102, Asn175, Glu176, Gly278, Trp279, Glu343, and Arg349. Glu176 acts as the Proton donor/acceptor in catalysis. 3 residues coordinate beta-D-glucose: Glu176, Gly278, and Trp279. The Nucleophile role is filled by Glu343. Residues Arg349, Lys358, and Glu361 each contribute to the beta-D-glucose site. Tyr378 contributes to the sophorose binding site. Ser708 and Tyr709 together coordinate beta-D-glucose.

The protein belongs to the glycosyl hydrolase 35 family. In terms of assembly, homidimer.

It is found in the cytoplasm. It carries out the reaction a D-glucoside + [(1-&gt;2)-beta-D-glucosyl](n) = a beta-D-glucosyl-(1-&gt;2)-D-glucoside + [(1-&gt;2)-beta-D-glucosyl](n-1). Its function is as follows. Glycosyltransferase acting on beta-1,2-glucooligosaccharides. Catalyzes the transfer of a glucosyl residue from the non-reducing end of a 1,2-beta-D-glucan to a glucose residue of an acceptor molecule, forming a beta-1,2-glucosidic bond. The beta-1,2-linked glucose dimer sophorose is the preferred donor in vitro. Has a very broad specificity for the acceptor and can act on various aryl- and alkyl-glucosides. Does not show any hydrolytic activity. The sequence is that of Beta-1,2-glucosyltransferase from Ignavibacterium album (strain DSM 19864 / JCM 16511 / NBRC 101810 / Mat9-16).